A 349-amino-acid chain; its full sequence is tRNA pseudouridine synthase D (349 aa).

Phenylalanine 27 lines the substrate pocket. Aspartate 80 serves as the catalytic Nucleophile. A substrate-binding site is contributed by asparagine 129. A TRUD domain is found at glycine 155–leucine 303. A substrate-binding site is contributed by phenylalanine 329.

Belongs to the pseudouridine synthase TruD family.

It catalyses the reaction uridine(13) in tRNA = pseudouridine(13) in tRNA. Its function is as follows. Responsible for synthesis of pseudouridine from uracil-13 in transfer RNAs. The sequence is that of tRNA pseudouridine synthase D from Escherichia coli O6:K15:H31 (strain 536 / UPEC).